The sequence spans 233 residues: Mediator of RNA polymerase II transcription subunit 7 (233 aa).

Lysine 185 participates in a covalent cross-link: Glycyl lysine isopeptide (Lys-Gly) (interchain with G-Cter in SUMO1); alternate. Residue lysine 185 forms a Glycyl lysine isopeptide (Lys-Gly) (interchain with G-Cter in SUMO2); alternate linkage. The interval 185-213 (KTEPMDTDDSNNCIGQNEQQRENSGHRRD) is disordered. Serine 194 carries the post-translational modification Phosphoserine. A compositionally biased stretch (basic and acidic residues) spans 203–213 (QQRENSGHRRD).

Belongs to the Mediator complex subunit 7 family. Component of the Mediator complex, which is composed of MED1, MED4, MED6, MED7, MED8, MED9, MED10, MED11, MED12, MED13, MED13L, MED14, MED15, MED16, MED17, MED18, MED19, MED20, MED21, MED22, MED23, MED24, MED25, MED26, MED27, MED29, MED30, MED31, CCNC, CDK8 and CDC2L6/CDK11. The MED12, MED13, CCNC and CDK8 subunits form a distinct module termed the CDK8 module. Mediator containing the CDK8 module is less active than Mediator lacking this module in supporting transcriptional activation. Individual preparations of the Mediator complex lacking one or more distinct subunits have been variously termed ARC, CRSP, DRIP, PC2, SMCC and TRAP.

The protein localises to the nucleus. Component of the Mediator complex, a coactivator involved in the regulated transcription of nearly all RNA polymerase II-dependent genes. Mediator functions as a bridge to convey information from gene-specific regulatory proteins to the basal RNA polymerase II transcription machinery. Mediator is recruited to promoters by direct interactions with regulatory proteins and serves as a scaffold for the assembly of a functional preinitiation complex with RNA polymerase II and the general transcription factors. The sequence is that of Mediator of RNA polymerase II transcription subunit 7 (MED7) from Bos taurus (Bovine).